A 207-amino-acid chain; its full sequence is MTPRQEQLIALGAIFESAYLVDRIAKTGLAGEAHLACMLGSLLVRNPKDTLEVYGGDDLNLLDGYRALASALERNPQSLQREPLRYSLALVTLERQLDKRDDMLQLMGRRLDQIQLQVQHLGLTHESVVAAFASLYEDTLSTFRQRIQVHGEMRHLQNPANAARIRALLLAGIRSARLWRQLGGHRWQLVFSRRKLLDELYPLIRRN.

Belongs to the HflD family.

The protein localises to the cytoplasm. It localises to the cell inner membrane. This chain is High frequency lysogenization protein HflD homolog, found in Azotobacter vinelandii (strain DJ / ATCC BAA-1303).